We begin with the raw amino-acid sequence, 815 residues long: MAAGEQQAAHRPGAYKQQNKPHKSGRHRGRGAQDRENKGRVAAKILGKKNKKDLRKLDRRHKANQIRRQRKDAVLAEKRSLGTKDGPPHLVIAISLHARAVKDDLFSLVQNNEGDILHVNDQIKGLLALVCPKVKQRWCFIQANRDDLCSLLDLAKVADTLLFLLDPQEGWDSYGDYCLSCLFAQGLPSYVLAVQGMNYIPIKKRADIKKQLSKVIENRFTDAKLFQLDTEQEAAVLIRQISTQKQRHLAFRSRRSYMLAQRADFQPTDESGLVGTLKLSGYVRGQELNVNRLVHIVGHGDFHMSQIDAPPDPYPLNPRVHKPKTKSGQDMEMSDEPATGSEMEQDIKVLMKADPSAQESLQCEVVPDPMEGEQTWPTEEELKEAEDALKGTSKVVKKVPKGTSAYQAAWILDDEGDGEEESDDDDDEDMEEDAEDAMDDAYSEEEDGSGNEEAEESETLTIPDSTRDDKYDENVDEQEEEQMLEKYKLQRQDEVFPDEVDTPRDQIARIRFQKYRGLKSFRTSPWDVKENLPRDYARIFQFHDFFRTRKRVFKEEEEKDEGAMVGWYVTVHISAVPVSVMEHFKHGLPLVLCSLLPHEQKMSVMNMLVRRHPGNNEPIKAKEELIFHCGFRRFRASPLFSQHSSADKHKSERFLRSDTSVVVTVYAPITFPPASVLVFKQRYNGMQDLVATGSLLNVNPDRIVIKRIVLSGHPFKIMKRTAVVRYMFFNREDVLWFKPVELRTKWGRRGHIKEPLGTHGHMKCHFDGQLKSQDTVLMNLYKRVYPKWTFDPYVPRPVTWVKNENTVDITEVEMD.

Positions 1 to 51 are disordered; it reads MAAGEQQAAHRPGAYKQQNKPHKSGRHRGRGAQDRENKGRVAAKILGKKNK. The segment covering 19–30 has biased composition (basic residues); the sequence is NKPHKSGRHRGR. The 161-residue stretch at 87 to 247 folds into the Bms1-type G domain; it reads PPHLVIAISL…IRQISTQKQR (161 aa). Disordered regions lie at residues 320 to 342 and 408 to 482; these read VHKP…TGSE and AAWI…EEEQ. Residues 412 to 458 are compositionally biased toward acidic residues; sequence LDDEGDGEEESDDDDDEDMEEDAEDAMDDAYSEEEDGSGNEEAEESE.

It belongs to the TRAFAC class translation factor GTPase superfamily. Bms1-like GTPase family. TSR1 subfamily.

The protein resides in the nucleus. Its subcellular location is the nucleolus. Functionally, required during maturation of the 40S ribosomal subunit in the nucleolus. This Xenopus laevis (African clawed frog) protein is Pre-rRNA-processing protein TSR1 homolog (tsr1).